A 223-amino-acid chain; its full sequence is MKRN2 opposite strand protein (223 aa).

This chain is MKRN2 opposite strand protein (MKRN2OS), found in Homo sapiens (Human).